Here is a 445-residue protein sequence, read N- to C-terminus: Glutamate-1-semialdehyde 2,1-aminomutase (445 aa).

The residue at position 263 (K263) is an N6-(pyridoxal phosphate)lysine.

The protein belongs to the class-III pyridoxal-phosphate-dependent aminotransferase family. HemL subfamily. Pyridoxal 5'-phosphate serves as cofactor.

The protein resides in the cytoplasm. The enzyme catalyses (S)-4-amino-5-oxopentanoate = 5-aminolevulinate. Its pathway is porphyrin-containing compound metabolism; protoporphyrin-IX biosynthesis; 5-aminolevulinate from L-glutamyl-tRNA(Glu): step 2/2. In Haloarcula marismortui (strain ATCC 43049 / DSM 3752 / JCM 8966 / VKM B-1809) (Halobacterium marismortui), this protein is Glutamate-1-semialdehyde 2,1-aminomutase.